Consider the following 390-residue polypeptide: Chorismate synthase (390 aa).

Residues arginine 40 and arginine 46 each contribute to the NADP(+) site. FMN is bound by residues arginine 128–serine 130, glutamine 251–alanine 252, glycine 296, lysine 311–threonine 315, and arginine 339.

It belongs to the chorismate synthase family. As to quaternary structure, homotetramer. The cofactor is FMNH2.

The catalysed reaction is 5-O-(1-carboxyvinyl)-3-phosphoshikimate = chorismate + phosphate. The protein operates within metabolic intermediate biosynthesis; chorismate biosynthesis; chorismate from D-erythrose 4-phosphate and phosphoenolpyruvate: step 7/7. In terms of biological role, catalyzes the anti-1,4-elimination of the C-3 phosphate and the C-6 proR hydrogen from 5-enolpyruvylshikimate-3-phosphate (EPSP) to yield chorismate, which is the branch point compound that serves as the starting substrate for the three terminal pathways of aromatic amino acid biosynthesis. This reaction introduces a second double bond into the aromatic ring system. This Sulfurihydrogenibium sp. (strain YO3AOP1) protein is Chorismate synthase.